The sequence spans 79 residues: Small ribosomal subunit protein bS18 (79 aa).

Part of the 30S ribosomal subunit. Forms a tight heterodimer with protein bS6. Both N-terminus methionine truncation and retention have been observed for this protein. In terms of processing, may be methylated up to 6 times, on undetermined residues.

Its function is as follows. Binds as a heterodimer with protein bS6 to the central domain of the 16S rRNA, where it helps stabilize the platform of the 30S subunit. The polypeptide is Small ribosomal subunit protein bS18 (Rhodopseudomonas palustris (strain ATCC BAA-98 / CGA009)).